Reading from the N-terminus, the 715-residue chain is Palmitoyltransferase ZDHHC5 (715 aa).

Residues 1–13 (MPAESGKRFKPSK) are Cytoplasmic-facing. Residues 14 to 34 (YVPVSAAAIFLVGATTLFFAF) form a helical membrane-spanning segment. The Extracellular segment spans residues 35-52 (TCPGLSLDVSPAVPIYNA). A helical membrane pass occupies residues 53–73 (IMFLFVLANFSMATFMDPGIF). Over 74–148 (PRAEEDEDKE…NCIGRRNYRY (75 aa)) the chain is Cytoplasmic. Tyr91 is modified (phosphotyrosine). Residues 104 to 154 (KWCATCRFYRPPRCSHCSVCDNCVEEFDHHCPWVNNCIGRRNYRYFFLFLL) form the DHHC domain. Cys134 (S-palmitoyl cysteine intermediate) is an active-site residue. Residues 149–169 (FFLFLLSLTAHIMGVFGFGLL) form a helical membrane-spanning segment. Topologically, residues 170-191 (YVLCHIEELSGVRTAVTMAVMC) are extracellular. Residues 192–212 (VAGLFFIPVAGLTGFHVVLVA) form a helical membrane-spanning segment. Topologically, residues 213-715 (RGRTTNEQVT…VGGTTYEISV (503 aa)) are cytoplasmic. Ser247 carries the post-translational modification Phosphoserine. Residues 289–715 (GELRRTKSKG…VGGTTYEISV (427 aa)) form a disordered region. Residue Thr294 is modified to Phosphothreonine. A phosphoserine mark is found at Ser296 and Ser299. Thr303 carries the phosphothreonine modification. Ser345 is subject to Phosphoserine. 2 positions are modified to phosphothreonine: Thr348 and Thr350. Positions 359–373 (SSSSTSAAMPHSSSA) are enriched in low complexity. 4 positions are modified to phosphoserine: Ser380, Ser398, Ser406, and Ser409. Thr411 carries the post-translational modification Phosphothreonine. Residues Ser415, Ser425, Ser429, and Ser432 each carry the phosphoserine modification. A compositionally biased stretch (low complexity) spans 422-432 (SSGSRSSSLKS). Position 436 is a phosphothreonine (Thr436). Residues 442-478 (QLQSIRSEGTTSTSYKSLANQTRNGSLSYDSLLTPSD) are compositionally biased toward polar residues. 2 positions are modified to phosphoserine: Ser529 and Ser554. Low complexity predominate over residues 581 to 597 (PRTSSSSDDSKRSPLSK). An Omega-N-methylarginine modification is found at Arg617. At Ser621 the chain carries Phosphoserine. Thr659 is modified (phosphothreonine). Residues 666 to 677 (LKTTYSKSNGQP) show a composition bias toward polar residues. Ser684 and Ser694 each carry phosphoserine. An Omega-N-methylarginine modification is found at Arg697.

The protein belongs to the DHHC palmitoyltransferase family. ERF2/ZDHHC9 subfamily. In terms of processing, autopalmitoylated. Palmitoylation of the C-terminal tail regulates stimulation-dependent plasma membrane motility. Phosphorylation regulates association with endocytic proteins and its subcellular localization. Phosphorylation by LYN during fatty acid uptake leads to inactivation of the activity.

It is found in the cell membrane. It carries out the reaction L-cysteinyl-[protein] + hexadecanoyl-CoA = S-hexadecanoyl-L-cysteinyl-[protein] + CoA. In terms of biological role, palmitoyltransferase that catalyzes the addition of palmitate onto various protein substrates such as CTNND2, CD36, GSDMD, NLRP3, NOD1, NOD2, STAT3 and S1PR1 thus plays a role in various biological processes including cell adhesion, inflammation, fatty acid uptake, bacterial sensing or cardiac functions. Plays an important role in the regulation of synapse efficacy by mediating palmitoylation of delta-catenin/CTNND2, thereby increasing synaptic delivery and surface stabilization of alpha-amino-3-hydroxy-5-methyl-4-isoxazole propionic acid receptors (AMPARs). Under basal conditions, remains at the synaptic membrane through FYN-mediated phosphorylation that prevents association with endocytic proteins. Neuronal activity enhances the internalization and trafficking of DHHC5 from spines to dendritic shafts where it palmitoylates delta-catenin/CTNND2. Regulates cell adhesion at the plasma membrane by palmitoylating GOLGA7B and DSG2. Plays a role in innate immune response by mediating the palmitoylation of NOD1 and NOD2 and their proper recruitment to the bacterial entry site and phagosomes. Also participates in fatty acid uptake by palmitoylating CD36 and thereby targeting it to the plasma membrane. Upon binding of fatty acids to CD36, gets phosphorylated by LYN leading to inactivation and subsequent CD36 caveolar endocytosis. Controls oligodendrocyte development by catalyzing STAT3 palmitoylation. Acts as a regulator of inflammatory response by mediating palmitoylation of NLRP3 and GSDMD. Palmitoylates NLRP3 to promote inflammasome assembly and activation. Activates pyroptosis by catalyzing palmitoylation of gasdermin-D (GSDMD), thereby promoting membrane translocation and pore formation of GSDMD. The chain is Palmitoyltransferase ZDHHC5 (Zdhhc5) from Rattus norvegicus (Rat).